We begin with the raw amino-acid sequence, 192 residues long: Phosphoheptose isomerase (192 aa).

Residues 37–192 (LADSFKAGGK…IQLIEKEMVK (156 aa)) form the SIS domain. Residue 52–54 (NGG) participates in substrate binding. Zn(2+) contacts are provided by His-61 and Glu-65. Substrate is bound by residues Glu-65, 93-94 (ND), 119-121 (STS), Ser-124, and Gln-172. Zn(2+) contacts are provided by Gln-172 and His-180.

The protein belongs to the SIS family. GmhA subfamily. Homotetramer. Zn(2+) is required as a cofactor.

Its subcellular location is the cytoplasm. It carries out the reaction 2 D-sedoheptulose 7-phosphate = D-glycero-alpha-D-manno-heptose 7-phosphate + D-glycero-beta-D-manno-heptose 7-phosphate. It participates in carbohydrate biosynthesis; D-glycero-D-manno-heptose 7-phosphate biosynthesis; D-glycero-alpha-D-manno-heptose 7-phosphate and D-glycero-beta-D-manno-heptose 7-phosphate from sedoheptulose 7-phosphate: step 1/1. Functionally, catalyzes the isomerization of sedoheptulose 7-phosphate in D-glycero-D-manno-heptose 7-phosphate. In Salmonella dublin (strain CT_02021853), this protein is Phosphoheptose isomerase.